The sequence spans 365 residues: Phosphate acyltransferase (365 aa).

Belongs to the PlsX family. In terms of assembly, homodimer. Probably interacts with PlsY.

It localises to the cytoplasm. The catalysed reaction is a fatty acyl-[ACP] + phosphate = an acyl phosphate + holo-[ACP]. The protein operates within lipid metabolism; phospholipid metabolism. In terms of biological role, catalyzes the reversible formation of acyl-phosphate (acyl-PO(4)) from acyl-[acyl-carrier-protein] (acyl-ACP). This enzyme utilizes acyl-ACP as fatty acyl donor, but not acyl-CoA. This Picosynechococcus sp. (strain ATCC 27264 / PCC 7002 / PR-6) (Agmenellum quadruplicatum) protein is Phosphate acyltransferase.